The following is a 309-amino-acid chain: Probable manganese-dependent inorganic pyrophosphatase (309 aa).

Residues His-9, Asp-13, Asp-15, Asp-75, His-97, and Asp-149 each contribute to the Mn(2+) site.

Belongs to the PPase class C family. It depends on Mn(2+) as a cofactor.

Its subcellular location is the cytoplasm. It catalyses the reaction diphosphate + H2O = 2 phosphate + H(+). This chain is Probable manganese-dependent inorganic pyrophosphatase, found in Staphylococcus haemolyticus (strain JCSC1435).